Here is a 157-residue protein sequence, read N- to C-terminus: RxLR effector protein PITG_04049 (157 aa).

A signal peptide spans 1-23 (MRLIAGVLAGFLVICEVTSTSES). The RxLR-dEER motif lies at 51–65 (QFLRTDVVMNRGEER).

This sequence belongs to the RxLR effector family.

It is found in the secreted. The protein resides in the host cytoplasm. The protein localises to the host nucleus. Functionally, effector that might be involved in host plant infection. This is RxLR effector protein PITG_04049 from Phytophthora infestans (strain T30-4) (Potato late blight agent).